Reading from the N-terminus, the 312-residue chain is Light-independent protochlorophyllide reductase iron-sulfur ATP-binding protein (312 aa).

Residues 55–60 (GIGKST) and Lys84 contribute to the ATP site. Ser59 is a binding site for Mg(2+). Cys140 and Cys174 together coordinate [4Fe-4S] cluster. ATP is bound by residues 225–226 (NR) and 249–251 (PDL).

This sequence belongs to the NifH/BchL/ChlL family. In terms of assembly, homodimer. Protochlorophyllide reductase is composed of three subunits; BchL, BchN and BchB. The cofactor is [4Fe-4S] cluster.

It catalyses the reaction chlorophyllide a + oxidized 2[4Fe-4S]-[ferredoxin] + 2 ADP + 2 phosphate = protochlorophyllide a + reduced 2[4Fe-4S]-[ferredoxin] + 2 ATP + 2 H2O. Its pathway is porphyrin-containing compound metabolism; bacteriochlorophyll biosynthesis (light-independent). Component of the dark-operative protochlorophyllide reductase (DPOR) that uses Mg-ATP and reduced ferredoxin to reduce ring D of protochlorophyllide (Pchlide) to form chlorophyllide a (Chlide). This reaction is light-independent. The L component serves as a unique electron donor to the NB-component of the complex, and binds Mg-ATP. This chain is Light-independent protochlorophyllide reductase iron-sulfur ATP-binding protein, found in Rhodopseudomonas palustris (strain ATCC BAA-98 / CGA009).